Here is a 555-residue protein sequence, read N- to C-terminus: Dihydroxy-acid dehydratase (555 aa).

Asp78 is a Mg(2+) binding site. [2Fe-2S] cluster is bound at residue Cys119. The Mg(2+) site is built by Asp120 and Lys121. Residue Lys121 is modified to N6-carboxylysine. Cys195 provides a ligand contact to [2Fe-2S] cluster. Glu444 lines the Mg(2+) pocket. The active-site Proton acceptor is Ser470.

It belongs to the IlvD/Edd family. In terms of assembly, homodimer. It depends on [2Fe-2S] cluster as a cofactor. Mg(2+) is required as a cofactor.

The catalysed reaction is (2R)-2,3-dihydroxy-3-methylbutanoate = 3-methyl-2-oxobutanoate + H2O. It catalyses the reaction (2R,3R)-2,3-dihydroxy-3-methylpentanoate = (S)-3-methyl-2-oxopentanoate + H2O. It participates in amino-acid biosynthesis; L-isoleucine biosynthesis; L-isoleucine from 2-oxobutanoate: step 3/4. It functions in the pathway amino-acid biosynthesis; L-valine biosynthesis; L-valine from pyruvate: step 3/4. In terms of biological role, functions in the biosynthesis of branched-chain amino acids. Catalyzes the dehydration of (2R,3R)-2,3-dihydroxy-3-methylpentanoate (2,3-dihydroxy-3-methylvalerate) into 2-oxo-3-methylpentanoate (2-oxo-3-methylvalerate) and of (2R)-2,3-dihydroxy-3-methylbutanoate (2,3-dihydroxyisovalerate) into 2-oxo-3-methylbutanoate (2-oxoisovalerate), the penultimate precursor to L-isoleucine and L-valine, respectively. This chain is Dihydroxy-acid dehydratase, found in Dehalococcoides mccartyi (strain CBDB1).